Consider the following 885-residue polypeptide: Protein kintoun (885 aa).

6 disordered regions span residues 208 to 235 (LSKNPTAEEKEPHPLEHMYPKKPEADAG), 371 to 390 (LSREDSGVELNSNGESPVED), 607 to 636 (ELQQLHHQKKLNKKQRKRNKKQRSLSESAC), 644 to 663 (EHHEQPMDTLKLPHRKQRSY), 781 to 806 (RRLSEGDSADYVEVDSTHGSGDQPAH), and 819 to 871 (NNNH…MMFE). Basic and acidic residues predominate over residues 213–232 (TAEEKEPHPLEHMYPKKPEA). Ser-376 bears the Phosphoserine mark. Over residues 612-629 (HHQKKLNKKQRKRNKKQR) the composition is skewed to basic residues. Residue Ser-784 is modified to Phosphoserine. Residues 824–837 (HVKDNKKQSLHDSG) show a composition bias toward basic and acidic residues. The span at 842-855 (NGSINNKNNHSNEN) shows a compositional bias: low complexity.

The protein belongs to the PIH1 family. Kintoun subfamily. In terms of assembly, interacts with Pp1alpha-96A, Pp1-87B, Pp1-13C and flw.

The protein resides in the cytoplasm. Its function is as follows. Required for cytoplasmic pre-assembly of axonemal dyneins, thereby playing a central role in motility in cilia and flagella. Involved in pre-assembly of dynein arm complexes in the cytoplasm before intraflagellar transport loads them for the ciliary compartment. The chain is Protein kintoun from Drosophila mojavensis (Fruit fly).